Here is a 138-residue protein sequence, read N- to C-terminus: Abscisic stress-ripening protein 5 (138 aa).

Basic residues predominate over residues Met1 to His13. Disordered stretches follow at residues Met1 to Gly27 and Gly106 to Gly138.

Belongs to the abscisic acid and water stress-induced protein family.

It localises to the nucleus. Its subcellular location is the cytoplasm. In terms of biological role, involved in tolerance to aluminum. Regulates the expression of different genes that collectively contribute to the protection of the cell in response to aluminum stress. The sequence is that of Abscisic stress-ripening protein 5 from Oryza sativa subsp. indica (Rice).